Consider the following 179-residue polypeptide: Probable chorismate pyruvate-lyase (179 aa).

Substrate is bound by residues Arg82, Leu120, and Glu165.

The protein belongs to the UbiC family.

The protein resides in the cytoplasm. The catalysed reaction is chorismate = 4-hydroxybenzoate + pyruvate. It functions in the pathway cofactor biosynthesis; ubiquinone biosynthesis. In terms of biological role, removes the pyruvyl group from chorismate, with concomitant aromatization of the ring, to provide 4-hydroxybenzoate (4HB) for the ubiquinone pathway. The polypeptide is Probable chorismate pyruvate-lyase (Vibrio cholerae serotype O1 (strain ATCC 39315 / El Tor Inaba N16961)).